The following is a 144-amino-acid chain: Large ribosomal subunit protein uL15 (144 aa).

Positions 1–10 are enriched in basic and acidic residues; that stretch reads MKLHELKPAE. The tract at residues 1–52 is disordered; the sequence is MKLHELKPAEGSRQVRNRVGRGTSSGNGKTAGRGQKGQKARGKVRLGFEGGQ. The span at 23 to 35 shows a compositional bias: gly residues; sequence TSSGNGKTAGRGQ.

The protein belongs to the universal ribosomal protein uL15 family. As to quaternary structure, part of the 50S ribosomal subunit.

Binds to the 23S rRNA. This is Large ribosomal subunit protein uL15 from Ligilactobacillus salivarius (strain UCC118) (Lactobacillus salivarius).